The chain runs to 314 residues: 4-hydroxy-3-methylbut-2-enyl diphosphate reductase (314 aa).

Cys-12 lines the [4Fe-4S] cluster pocket. His-41 and His-74 together coordinate (2E)-4-hydroxy-3-methylbut-2-enyl diphosphate. Dimethylallyl diphosphate is bound by residues His-41 and His-74. Positions 41 and 74 each coordinate isopentenyl diphosphate. A [4Fe-4S] cluster-binding site is contributed by Cys-96. His-124 serves as a coordination point for (2E)-4-hydroxy-3-methylbut-2-enyl diphosphate. His-124 contacts dimethylallyl diphosphate. His-124 is a binding site for isopentenyl diphosphate. Glu-126 serves as the catalytic Proton donor. A (2E)-4-hydroxy-3-methylbut-2-enyl diphosphate-binding site is contributed by Thr-167. Cys-197 contacts [4Fe-4S] cluster. 4 residues coordinate (2E)-4-hydroxy-3-methylbut-2-enyl diphosphate: Ser-225, Ser-226, Asn-227, and Ser-269. 4 residues coordinate dimethylallyl diphosphate: Ser-225, Ser-226, Asn-227, and Ser-269. Positions 225, 226, 227, and 269 each coordinate isopentenyl diphosphate.

This sequence belongs to the IspH family. Requires [4Fe-4S] cluster as cofactor.

The enzyme catalyses isopentenyl diphosphate + 2 oxidized [2Fe-2S]-[ferredoxin] + H2O = (2E)-4-hydroxy-3-methylbut-2-enyl diphosphate + 2 reduced [2Fe-2S]-[ferredoxin] + 2 H(+). The catalysed reaction is dimethylallyl diphosphate + 2 oxidized [2Fe-2S]-[ferredoxin] + H2O = (2E)-4-hydroxy-3-methylbut-2-enyl diphosphate + 2 reduced [2Fe-2S]-[ferredoxin] + 2 H(+). The protein operates within isoprenoid biosynthesis; dimethylallyl diphosphate biosynthesis; dimethylallyl diphosphate from (2E)-4-hydroxy-3-methylbutenyl diphosphate: step 1/1. It participates in isoprenoid biosynthesis; isopentenyl diphosphate biosynthesis via DXP pathway; isopentenyl diphosphate from 1-deoxy-D-xylulose 5-phosphate: step 6/6. In terms of biological role, catalyzes the conversion of 1-hydroxy-2-methyl-2-(E)-butenyl 4-diphosphate (HMBPP) into a mixture of isopentenyl diphosphate (IPP) and dimethylallyl diphosphate (DMAPP). Acts in the terminal step of the DOXP/MEP pathway for isoprenoid precursor biosynthesis. The protein is 4-hydroxy-3-methylbut-2-enyl diphosphate reductase of Idiomarina loihiensis (strain ATCC BAA-735 / DSM 15497 / L2-TR).